A 297-amino-acid chain; its full sequence is Nucleotide-binding protein BURPS668_0577 (297 aa).

Residue 8–15 (GISGSGKS) participates in ATP binding. A GTP-binding site is contributed by 57–60 (DARS).

Belongs to the RapZ-like family.

Functionally, displays ATPase and GTPase activities. The sequence is that of Nucleotide-binding protein BURPS668_0577 from Burkholderia pseudomallei (strain 668).